The chain runs to 245 residues: uncharacterized protein (245 aa).

The signal sequence occupies residues 1-18 (MKSAAILALLAQALAVTA). The interval 21–66 (VEGDRTPGTRTLDLPNFPGGSVPTRGVEKRADLPPDNGGGNAPDPD) is disordered. N-linked (GlcNAc...) asparagine glycosylation is found at N189 and N225.

The protein resides in the secreted. This is an uncharacterized protein from Arthroderma benhamiae (strain ATCC MYA-4681 / CBS 112371) (Trichophyton mentagrophytes).